A 191-amino-acid polypeptide reads, in one-letter code: Adenylate kinase (191 aa).

9–17 is a binding site for ATP; the sequence is GVPGVGATT.

It belongs to the archaeal adenylate kinase family.

It is found in the cytoplasm. The catalysed reaction is AMP + ATP = 2 ADP. The protein is Adenylate kinase of Methanopyrus kandleri (strain AV19 / DSM 6324 / JCM 9639 / NBRC 100938).